A 417-amino-acid chain; its full sequence is MFSRDLTIAKYDADLFAAMEQEALRQEEHIELIASENYTSPAVMEAQGSALTNKYAEGYPGKRYYGGCEYVDIIEQLAIDRAKELFGADYANVQPHAGSQANSAVYLALLQGGDTILGMSLAHGGHLTHGASVSSSGKLYNAVQYGIDANGMIDYDEVERLAVEHKPKMIVAGFSAYSQILDFPRFRAIADKVGAYLFVDMAHVAGLVAAGVYPNPVPFADVVTTTTHKTLRGPRGGLILARANAEIEKKLNSAVFPGSQGGPLEHVIAAKAVCFKEALQPEFKTYQQQVVKNAKAMAGVFIERGFDVVSGGTENHLFLLSLIKQDISGKDADAALGRAFITVNKNSVPNDPRSPFVTSGLRFGTPAVTTRGFKEAECKELAGWICDILADLNNEAVIDAVREKVKAICAKLPVYGA.

(6S)-5,6,7,8-tetrahydrofolate-binding positions include L121 and 125-127; that span reads GHL. At K229 the chain carries N6-(pyridoxal phosphate)lysine. 354 to 356 contacts (6S)-5,6,7,8-tetrahydrofolate; the sequence is SPF.

It belongs to the SHMT family. As to quaternary structure, homodimer. It depends on pyridoxal 5'-phosphate as a cofactor.

It localises to the cytoplasm. It carries out the reaction (6R)-5,10-methylene-5,6,7,8-tetrahydrofolate + glycine + H2O = (6S)-5,6,7,8-tetrahydrofolate + L-serine. It participates in one-carbon metabolism; tetrahydrofolate interconversion. It functions in the pathway amino-acid biosynthesis; glycine biosynthesis; glycine from L-serine: step 1/1. Functionally, catalyzes the reversible interconversion of serine and glycine with tetrahydrofolate (THF) serving as the one-carbon carrier. This reaction serves as the major source of one-carbon groups required for the biosynthesis of purines, thymidylate, methionine, and other important biomolecules. Also exhibits THF-independent aldolase activity toward beta-hydroxyamino acids, producing glycine and aldehydes, via a retro-aldol mechanism. The polypeptide is Serine hydroxymethyltransferase 1 (Pseudomonas syringae pv. syringae (strain B728a)).